The chain runs to 380 residues: Cytochrome b (380 aa).

4 helical membrane-spanning segments follow: residues 34–54 (FGSL…LLAM), 78–99 (WLIR…FLHI), 114–134 (WNTG…GYVL), and 179–199 (FFAL…IHLT). The heme b site is built by histidine 84 and histidine 98. Heme b-binding residues include histidine 183 and histidine 197. An a ubiquinone-binding site is contributed by histidine 202. 4 helical membrane-spanning segments follow: residues 227–247 (IKDI…ALFS), 289–309 (LGGV…PFLH), 321–341 (LSQT…WIGS), and 348–368 (FIII…ILFP).

Belongs to the cytochrome b family. As to quaternary structure, the cytochrome bc1 complex contains 11 subunits: 3 respiratory subunits (MT-CYB, CYC1 and UQCRFS1), 2 core proteins (UQCRC1 and UQCRC2) and 6 low-molecular weight proteins (UQCRH/QCR6, UQCRB/QCR7, UQCRQ/QCR8, UQCR10/QCR9, UQCR11/QCR10 and a cleavage product of UQCRFS1). This cytochrome bc1 complex then forms a dimer. Requires heme b as cofactor.

It localises to the mitochondrion inner membrane. Functionally, component of the ubiquinol-cytochrome c reductase complex (complex III or cytochrome b-c1 complex) that is part of the mitochondrial respiratory chain. The b-c1 complex mediates electron transfer from ubiquinol to cytochrome c. Contributes to the generation of a proton gradient across the mitochondrial membrane that is then used for ATP synthesis. This is Cytochrome b (MT-CYB) from Alectoris chukar (Chukar partridge).